Consider the following 177-residue polypeptide: dCTP deaminase, dUMP-forming (177 aa).

Residues 95–100 (RSSLGR), aspartate 112, 120–122 (TLE), glutamine 141, tyrosine 155, and glutamine 162 each bind dCTP. The Proton donor/acceptor role is filled by glutamate 122.

Belongs to the dCTP deaminase family. As to quaternary structure, homotrimer.

The catalysed reaction is dCTP + 2 H2O = dUMP + NH4(+) + diphosphate. It functions in the pathway pyrimidine metabolism; dUMP biosynthesis; dUMP from dCTP: step 1/1. In terms of biological role, bifunctional enzyme that catalyzes both the deamination of dCTP to dUTP and the hydrolysis of dUTP to dUMP without releasing the toxic dUTP intermediate. In Hydrogenobaculum sp. (strain Y04AAS1), this protein is dCTP deaminase, dUMP-forming.